Consider the following 193-residue polypeptide: MIEITPIAQAHFKKLLEPQKEGTHIRVFVINPGTAKAECGVSYCPPEAVESSDTRLTFDGFDALIDEVSVPFLEDAFVDLVEEDAGTQLTLKAPNAKMRKVKDDAPLLERVEYVIQVQINPQLASHGGFIKLIEITEDNVAIIEFGGGCNGCSQVDLTLKQGVEKELIDEFSGELNAVRDITEHESGDHSFYK.

[4Fe-4S] cluster is bound by residues Cys149 and Cys152.

Belongs to the NfuA family. In terms of assembly, homodimer. It depends on [4Fe-4S] cluster as a cofactor.

Involved in iron-sulfur cluster biogenesis. Binds a 4Fe-4S cluster, can transfer this cluster to apoproteins, and thereby intervenes in the maturation of Fe/S proteins. Could also act as a scaffold/chaperone for damaged Fe/S proteins. The protein is Fe/S biogenesis protein NfuA of Psychromonas ingrahamii (strain DSM 17664 / CCUG 51855 / 37).